The sequence spans 292 residues: Homoserine kinase (292 aa).

84–94 lines the ATP pocket; the sequence is PLARGMGSSSA.

This sequence belongs to the GHMP kinase family. Homoserine kinase subfamily.

It is found in the cytoplasm. It catalyses the reaction L-homoserine + ATP = O-phospho-L-homoserine + ADP + H(+). It participates in amino-acid biosynthesis; L-threonine biosynthesis; L-threonine from L-aspartate: step 4/5. Its function is as follows. Catalyzes the ATP-dependent phosphorylation of L-homoserine to L-homoserine phosphate. The sequence is that of Homoserine kinase from Thermus thermophilus (strain ATCC BAA-163 / DSM 7039 / HB27).